The primary structure comprises 142 residues: Large ribosomal subunit protein uL13 (142 aa).

The protein belongs to the universal ribosomal protein uL13 family. Part of the 50S ribosomal subunit.

This protein is one of the early assembly proteins of the 50S ribosomal subunit, although it is not seen to bind rRNA by itself. It is important during the early stages of 50S assembly. This is Large ribosomal subunit protein uL13 from Paraburkholderia phytofirmans (strain DSM 17436 / LMG 22146 / PsJN) (Burkholderia phytofirmans).